A 149-amino-acid polypeptide reads, in one-letter code: Large ribosomal subunit protein bL9 (149 aa).

Belongs to the bacterial ribosomal protein bL9 family.

Functionally, binds to the 23S rRNA. The sequence is that of Large ribosomal subunit protein bL9 from Thermotoga petrophila (strain ATCC BAA-488 / DSM 13995 / JCM 10881 / RKU-1).